The primary structure comprises 319 residues: D-ribose/D-allose-binding protein (319 aa).

A signal peptide spans 1–29 (MKRVASRRLLAAVVLTACSSFLPLSAVHA).

Belongs to the bacterial solute-binding protein 2 family.

Its subcellular location is the periplasm. Its function is as follows. Binds specifically both D-ribose and D-allose, with affinities in the lower micromolar range. This Pseudomonas aeruginosa (strain ATCC 15692 / DSM 22644 / CIP 104116 / JCM 14847 / LMG 12228 / 1C / PRS 101 / PAO1) protein is D-ribose/D-allose-binding protein.